The primary structure comprises 189 residues: Thymidine kinase (189 aa).

ATP-binding positions include 9 to 16 and 85 to 88; these read GTMNSGKT and DESQ. The Proton acceptor role is filled by Glu-86. Residues Cys-143, Cys-146, Cys-180, and His-183 each coordinate Zn(2+).

The protein belongs to the thymidine kinase family. As to quaternary structure, homotetramer.

Its subcellular location is the cytoplasm. It carries out the reaction thymidine + ATP = dTMP + ADP + H(+). The chain is Thymidine kinase from Streptococcus pyogenes serotype M6 (strain ATCC BAA-946 / MGAS10394).